We begin with the raw amino-acid sequence, 257 residues long: Pyridoxine 5'-phosphate synthase (257 aa).

A 3-amino-2-oxopropyl phosphate-binding site is contributed by Asn6. 8–9 lines the 1-deoxy-D-xylulose 5-phosphate pocket; that stretch reads DH. Residue Arg17 coordinates 3-amino-2-oxopropyl phosphate. Catalysis depends on His41, which acts as the Proton acceptor. Residues Arg43 and His48 each coordinate 1-deoxy-D-xylulose 5-phosphate. The Proton acceptor role is filled by Glu68. Thr98 contributes to the 1-deoxy-D-xylulose 5-phosphate binding site. The Proton donor role is filled by His210. Residues Gly211 and 232-233 each bind 3-amino-2-oxopropyl phosphate; that span reads GQ.

Belongs to the PNP synthase family. Homooctamer; tetramer of dimers.

The protein resides in the cytoplasm. It catalyses the reaction 3-amino-2-oxopropyl phosphate + 1-deoxy-D-xylulose 5-phosphate = pyridoxine 5'-phosphate + phosphate + 2 H2O + H(+). The protein operates within cofactor biosynthesis; pyridoxine 5'-phosphate biosynthesis; pyridoxine 5'-phosphate from D-erythrose 4-phosphate: step 5/5. Catalyzes the complicated ring closure reaction between the two acyclic compounds 1-deoxy-D-xylulose-5-phosphate (DXP) and 3-amino-2-oxopropyl phosphate (1-amino-acetone-3-phosphate or AAP) to form pyridoxine 5'-phosphate (PNP) and inorganic phosphate. The protein is Pyridoxine 5'-phosphate synthase of Campylobacter jejuni subsp. jejuni serotype O:6 (strain 81116 / NCTC 11828).